We begin with the raw amino-acid sequence, 225 residues long: uncharacterized protein (225 aa).

This is an uncharacterized protein from Amsacta moorei entomopoxvirus (AmEPV).